The following is a 512-amino-acid chain: 2,3-bisphosphoglycerate-independent phosphoglycerate mutase (512 aa).

Mn(2+) is bound by residues aspartate 12 and serine 62. Serine 62 serves as the catalytic Phosphoserine intermediate. Substrate contacts are provided by residues histidine 123, 153–154 (RD), arginine 185, arginine 191, 260–263 (RPDR), and lysine 333. Residues aspartate 400, histidine 404, aspartate 441, histidine 442, and histidine 460 each coordinate Mn(2+).

This sequence belongs to the BPG-independent phosphoglycerate mutase family. Monomer. It depends on Mn(2+) as a cofactor.

It carries out the reaction (2R)-2-phosphoglycerate = (2R)-3-phosphoglycerate. It participates in carbohydrate degradation; glycolysis; pyruvate from D-glyceraldehyde 3-phosphate: step 3/5. Its function is as follows. Catalyzes the interconversion of 2-phosphoglycerate and 3-phosphoglycerate. In Clostridium perfringens (strain SM101 / Type A), this protein is 2,3-bisphosphoglycerate-independent phosphoglycerate mutase.